Here is a 130-residue protein sequence, read N- to C-terminus: MSMQDPVADMLTRIRNGQSANKYSVKMPCSKLKYSIIELLKKEGYIKNFNIQGNNKLKIEVILKYFKGKSVIETIQRVSRPSLRIYKKKNNLPTVMAGLGIAIISTSQGIMTDRKARRLGLGGEVICYVA.

This sequence belongs to the universal ribosomal protein uS8 family. In terms of assembly, part of the 30S ribosomal subunit. Contacts proteins S5 and S12.

One of the primary rRNA binding proteins, it binds directly to 16S rRNA central domain where it helps coordinate assembly of the platform of the 30S subunit. In Buchnera aphidicola subsp. Schizaphis graminum (strain Sg), this protein is Small ribosomal subunit protein uS8.